We begin with the raw amino-acid sequence, 147 residues long: MTASSSGCGGLPVSQCPSYSSLSKLFFMDSSYDSYYCEEPEERQTASIRERKRMCSINVAFIELRNYIPTFPYEKRLSKIDTLNLAIAYINMLDDVLRTPEDSGQYIQKCVHMARTGQIGAPAWSTSDLLARLNWIKWRRLGIEPIA.

In terms of domain architecture, bHLH spans 41-93 (EERQTASIRERKRMCSINVAFIELRNYIPTFPYEKRLSKIDTLNLAIAYINML).

In terms of tissue distribution, expressed in hermaphrodite dopaminergic neurons (ADE, CEP, and PDE).

It is found in the nucleus. Its subcellular location is the cytoplasm. Transcriptional activator. Shown to have a role in the negative regulation of exit from L1 arrest and dauer diapause dependent on IIS signaling (insulin and insulin-like growth factor (IGF) signaling). Hypodermal expression is regulated by IIS/daf-16 while neuronal expression is not under the control of IIS/daf-16. In Caenorhabditis elegans, this protein is Helix-loop-helix protein 13.